The primary structure comprises 400 residues: Acetyl-CoA decarbonylase/synthase complex subunit delta (400 aa).

The protein belongs to the CdhD family. Heterodimer of delta and gamma chains. The ACDS complex is made up of alpha, epsilon, beta, gamma and delta chains with a probable stoichiometry of (alpha(2)epsilon(2))(4)-beta(8)-(gamma(1)delta(1))(8).

In terms of biological role, part of a complex that catalyzes the reversible cleavage of acetyl-CoA, allowing autotrophic growth from CO(2). Probably maintains the overall quaternary structure of the ACDS complex. The chain is Acetyl-CoA decarbonylase/synthase complex subunit delta from Methanopyrus kandleri (strain AV19 / DSM 6324 / JCM 9639 / NBRC 100938).